A 428-amino-acid chain; its full sequence is Histidinol dehydrogenase (428 aa).

NAD(+) contacts are provided by Tyr-129, Gln-188, and Asn-211. 3 residues coordinate substrate: Ser-234, Gln-256, and His-259. The Zn(2+) site is built by Gln-256 and His-259. Catalysis depends on proton acceptor residues Glu-323 and His-324. Substrate-binding residues include His-324, Asp-357, Glu-411, and His-416. Asp-357 is a binding site for Zn(2+). His-416 contacts Zn(2+).

Belongs to the histidinol dehydrogenase family. Requires Zn(2+) as cofactor.

It catalyses the reaction L-histidinol + 2 NAD(+) + H2O = L-histidine + 2 NADH + 3 H(+). The protein operates within amino-acid biosynthesis; L-histidine biosynthesis; L-histidine from 5-phospho-alpha-D-ribose 1-diphosphate: step 9/9. In terms of biological role, catalyzes the sequential NAD-dependent oxidations of L-histidinol to L-histidinaldehyde and then to L-histidine. The chain is Histidinol dehydrogenase from Caulobacter vibrioides (strain ATCC 19089 / CIP 103742 / CB 15) (Caulobacter crescentus).